A 237-amino-acid chain; its full sequence is Demethylmenaquinone methyltransferase (237 aa).

S-adenosyl-L-methionine is bound by residues T58, D79, and 106 to 107; that span reads NA.

Belongs to the class I-like SAM-binding methyltransferase superfamily. MenG/UbiE family.

The catalysed reaction is a 2-demethylmenaquinol + S-adenosyl-L-methionine = a menaquinol + S-adenosyl-L-homocysteine + H(+). Its pathway is quinol/quinone metabolism; menaquinone biosynthesis; menaquinol from 1,4-dihydroxy-2-naphthoate: step 2/2. Functionally, methyltransferase required for the conversion of demethylmenaquinol (DMKH2) to menaquinol (MKH2). The polypeptide is Demethylmenaquinone methyltransferase (Listeria innocua serovar 6a (strain ATCC BAA-680 / CLIP 11262)).